The following is a 160-amino-acid chain: Transcription antitermination protein NusB (160 aa).

It belongs to the NusB family.

Involved in transcription antitermination. Required for transcription of ribosomal RNA (rRNA) genes. Binds specifically to the boxA antiterminator sequence of the ribosomal RNA (rrn) operons. The protein is Transcription antitermination protein NusB of Maricaulis maris (strain MCS10) (Caulobacter maris).